We begin with the raw amino-acid sequence, 388 residues long: Phosphoglycerate kinase (388 aa).

Substrate-binding positions include 24-26 (DLN), Arg-37, 56-59 (RGGR), Arg-117, and Arg-165. Residues 26–136 (NVPLDSDGEQ…RRPRNVQGRR (111 aa)) form a disordered region. The span at 34–55 (EQGRITDPGPDHRVGADVERTG) shows a compositional bias: basic and acidic residues. The segment covering 102-136 (GGHRRPGPRRGVDRRRRPAAGKHPVRRPRNVQGRR) has biased composition (basic residues). ATP is bound by residues Lys-215, Gly-303, Glu-334, and 363–366 (GGDS).

This sequence belongs to the phosphoglycerate kinase family. Monomer.

It localises to the cytoplasm. The catalysed reaction is (2R)-3-phosphoglycerate + ATP = (2R)-3-phospho-glyceroyl phosphate + ADP. The protein operates within carbohydrate degradation; glycolysis; pyruvate from D-glyceraldehyde 3-phosphate: step 2/5. The chain is Phosphoglycerate kinase (pgk) from Mycobacterium avium.